The sequence spans 412 residues: Proline-rich protein 30 (412 aa).

Positions 33–45 (HNLQPLSAHQSLR) are enriched in polar residues. Disordered stretches follow at residues 33–75 (HNLQ…QFGS), 123–174 (PLTP…SNRQ), and 318–412 (PKEV…KSSV). Low complexity-rich tracts occupy residues 126–142 (PSFS…PHSP) and 334–350 (PSPA…ADPA). Residues 353–372 (TPSQTRSFRSAGLQSPNSPR) are compositionally biased toward polar residues.

This Macaca fascicularis (Crab-eating macaque) protein is Proline-rich protein 30 (PRR30).